A 44-amino-acid polypeptide reads, in one-letter code: MRDIKTYLSVAPVLATLWFGSLAGLLIEINRLFPDALVFPFFSF.

The helical transmembrane segment at 7 to 27 (YLSVAPVLATLWFGSLAGLLI) threads the bilayer.

It belongs to the PsaJ family.

The protein localises to the plastid. It localises to the chloroplast thylakoid membrane. Its function is as follows. May help in the organization of the PsaE and PsaF subunits. In Piper cenocladum (Ant piper), this protein is Photosystem I reaction center subunit IX.